The following is a 388-amino-acid chain: L-lactate dehydrogenase (388 aa).

Positions 1–380 (MIISAASDYR…SADALSRVTR (380 aa)) constitute an FMN hydroxy acid dehydrogenase domain. Tyr-24 is a substrate binding site. FMN contacts are provided by Ser-106 and Gln-127. Residue Tyr-129 coordinates substrate. FMN is bound at residue Thr-155. Arg-164 serves as a coordination point for substrate. Lys-251 is a binding site for FMN. Residue His-275 is the Proton acceptor of the active site. Residue Arg-278 coordinates substrate. 306-330 (DSGIRSGLDVVRMLALGADAVLLGR) serves as a coordination point for FMN.

Belongs to the FMN-dependent alpha-hydroxy acid dehydrogenase family. It depends on FMN as a cofactor.

Its subcellular location is the cell inner membrane. The enzyme catalyses (S)-lactate + A = pyruvate + AH2. Functionally, catalyzes the conversion of L-lactate to pyruvate. Is coupled to the respiratory chain. The polypeptide is L-lactate dehydrogenase (Xanthomonas axonopodis pv. citri (strain 306)).